Reading from the N-terminus, the 267-residue chain is Tryptophan synthase alpha chain (267 aa).

Active-site proton acceptor residues include E49 and D60.

It belongs to the TrpA family. In terms of assembly, tetramer of two alpha and two beta chains.

The catalysed reaction is (1S,2R)-1-C-(indol-3-yl)glycerol 3-phosphate + L-serine = D-glyceraldehyde 3-phosphate + L-tryptophan + H2O. Its pathway is amino-acid biosynthesis; L-tryptophan biosynthesis; L-tryptophan from chorismate: step 5/5. In terms of biological role, the alpha subunit is responsible for the aldol cleavage of indoleglycerol phosphate to indole and glyceraldehyde 3-phosphate. The chain is Tryptophan synthase alpha chain from Solibacter usitatus (strain Ellin6076).